The sequence spans 559 residues: Glucose-6-phosphate isomerase 2 (559 aa).

The active-site Proton donor is the Glu367. Residues His398 and Lys522 contribute to the active site.

It belongs to the GPI family.

It is found in the cytoplasm. The enzyme catalyses alpha-D-glucose 6-phosphate = beta-D-fructose 6-phosphate. It functions in the pathway carbohydrate biosynthesis; gluconeogenesis. Its pathway is carbohydrate degradation; glycolysis; D-glyceraldehyde 3-phosphate and glycerone phosphate from D-glucose: step 2/4. Its function is as follows. Catalyzes the reversible isomerization of glucose-6-phosphate to fructose-6-phosphate. This Chromohalobacter salexigens (strain ATCC BAA-138 / DSM 3043 / CIP 106854 / NCIMB 13768 / 1H11) protein is Glucose-6-phosphate isomerase 2.